A 228-amino-acid polypeptide reads, in one-letter code: L-ribulose-5-phosphate 4-epimerase UlaF (228 aa).

Substrate contacts are provided by residues glycine 26–asparagine 27, serine 43–glycine 44, and serine 72–serine 73. Positions 74, 93, and 95 each coordinate Zn(2+). The Proton donor/acceptor role is filled by aspartate 118. Position 167 (histidine 167) interacts with Zn(2+). The active-site Proton donor/acceptor is the tyrosine 225.

It belongs to the aldolase class II family. AraD/FucA subfamily. Requires Zn(2+) as cofactor.

It carries out the reaction L-ribulose 5-phosphate = D-xylulose 5-phosphate. Its pathway is cofactor degradation; L-ascorbate degradation; D-xylulose 5-phosphate from L-ascorbate: step 4/4. Functionally, catalyzes the isomerization of L-ribulose 5-phosphate to D-xylulose 5-phosphate. Is involved in the anaerobic L-ascorbate utilization. The sequence is that of L-ribulose-5-phosphate 4-epimerase UlaF from Escherichia coli O81 (strain ED1a).